The sequence spans 150 residues: MPTFKLVLSDPRSGKSKQLEVKDEVAQRLIGLRIGDVFDAQLIKEIIDLPQGFRIKITGGTGYDGAPMHPGIEGPVKKYALLSGRPGFRPEKKGLRVRRLIRGNTISDQIVQVNAVLVYPENWDKEPVIQVSGEAKPTEAKAEEKAEAAQ.

Belongs to the eukaryotic ribosomal protein eS6 family.

This Caldivirga maquilingensis (strain ATCC 700844 / DSM 13496 / JCM 10307 / IC-167) protein is Small ribosomal subunit protein eS6.